The sequence spans 425 residues: L-lysine 2,3-aminomutase (425 aa).

Residues 113–325 form the Radical SAM core domain; it reads HRYPDRVLLL…GLRGHTSGYA (213 aa). Cysteine 127, cysteine 131, and cysteine 134 together coordinate [4Fe-4S] cluster. Lysine 339 carries the N6-(pyridoxal phosphate)lysine modification.

This sequence belongs to the radical SAM superfamily. KamA family. Homotetramer. Requires [4Fe-4S] cluster as cofactor. The cofactor is pyridoxal 5'-phosphate.

It catalyses the reaction L-lysine = (3S)-3,6-diaminohexanoate. It functions in the pathway amino-acid degradation; L-lysine degradation via acetate pathway. Functionally, catalyzes the interconversion of L-alpha-lysine and L-beta-lysine. This Fusobacterium nucleatum subsp. nucleatum (strain ATCC 25586 / DSM 15643 / BCRC 10681 / CIP 101130 / JCM 8532 / KCTC 2640 / LMG 13131 / VPI 4355) protein is L-lysine 2,3-aminomutase.